The sequence spans 170 residues: Inosine/xanthosine triphosphatase (170 aa).

The protein belongs to the YjjX NTPase family. In terms of assembly, homodimer. Requires Mg(2+) as cofactor. It depends on Mn(2+) as a cofactor.

It carries out the reaction XTP + H2O = XDP + phosphate + H(+). It catalyses the reaction ITP + H2O = IDP + phosphate + H(+). Phosphatase that hydrolyzes non-canonical purine nucleotides such as XTP and ITP to their respective diphosphate derivatives. Probably excludes non-canonical purines from DNA/RNA precursor pool, thus preventing their incorporation into DNA/RNA and avoiding chromosomal lesions. The chain is Inosine/xanthosine triphosphatase from Aliivibrio fischeri (strain MJ11) (Vibrio fischeri).